A 304-amino-acid chain; its full sequence is Non-specific ribonucleoside hydrolase RihC (304 aa).

Histidine 233 is an active-site residue.

Belongs to the IUNH family. RihC subfamily.

In terms of biological role, hydrolyzes both purine and pyrimidine ribonucleosides with a broad-substrate specificity. The polypeptide is Non-specific ribonucleoside hydrolase RihC (Shigella sonnei (strain Ss046)).